The primary structure comprises 600 residues: Glutamine--fructose-6-phosphate aminotransferase [isomerizing] (600 aa).

Cys2 serves as the catalytic Nucleophile; for GATase activity. The 216-residue stretch at 2–217 folds into the Glutamine amidotransferase type-2 domain; it reads CGIVGFIGEQ…DKEIVIVMKE (216 aa). SIS domains lie at 283-422 and 452-590; these read IRNA…AKGE and LAKQ…VDKP. Lys595 (for Fru-6P isomerization activity) is an active-site residue.

In terms of assembly, homodimer.

It localises to the cytoplasm. The catalysed reaction is D-fructose 6-phosphate + L-glutamine = D-glucosamine 6-phosphate + L-glutamate. Catalyzes the first step in hexosamine metabolism, converting fructose-6P into glucosamine-6P using glutamine as a nitrogen source. In Bacillus thuringiensis subsp. konkukian (strain 97-27), this protein is Glutamine--fructose-6-phosphate aminotransferase [isomerizing].